Reading from the N-terminus, the 270-residue chain is Putative phosphoenolpyruvate synthase regulatory protein (270 aa).

150–157 contacts ADP; sequence GVSRCGKT.

Belongs to the pyruvate, phosphate/water dikinase regulatory protein family. PSRP subfamily.

It carries out the reaction [pyruvate, water dikinase] + ADP = [pyruvate, water dikinase]-phosphate + AMP + H(+). It catalyses the reaction [pyruvate, water dikinase]-phosphate + phosphate + H(+) = [pyruvate, water dikinase] + diphosphate. Its function is as follows. Bifunctional serine/threonine kinase and phosphorylase involved in the regulation of the phosphoenolpyruvate synthase (PEPS) by catalyzing its phosphorylation/dephosphorylation. This is Putative phosphoenolpyruvate synthase regulatory protein from Shewanella woodyi (strain ATCC 51908 / MS32).